Consider the following 148-residue polypeptide: Probable calcium-binding protein CML7 (148 aa).

3 EF-hand domains span residues 9–44 (EQVASMREAFSLFDTDGDGRIAPSELGVLMRSLGGN), 80–115 (PFDRPLRDAFRVLDKDASGTVSVADLRHVLTSIGEK), and 116–148 (LEPHEFDEWIREVDVAPDGTIRYDDFIRRIVAK). Ca(2+) is bound by residues D22, D24, D26, R28, E33, D93, D95, S97, T99, and D104.

Functionally, potential calcium sensor. This is Probable calcium-binding protein CML7 (CML7) from Oryza sativa subsp. japonica (Rice).